The chain runs to 113 residues: Cell cycle protein GpsB (113 aa).

Residues Ile36–Gln65 adopt a coiled-coil conformation. Residues Ala61 to Ala82 are disordered.

Belongs to the GpsB family. In terms of assembly, forms polymers through the coiled coil domains. Interacts with PBP1, MreC and EzrA.

It localises to the cytoplasm. Functionally, divisome component that associates with the complex late in its assembly, after the Z-ring is formed, and is dependent on DivIC and PBP2B for its recruitment to the divisome. Together with EzrA, is a key component of the system that regulates PBP1 localization during cell cycle progression. Its main role could be the removal of PBP1 from the cell pole after pole maturation is completed. Also contributes to the recruitment of PBP1 to the division complex. Not essential for septum formation. This chain is Cell cycle protein GpsB, found in Streptococcus pneumoniae (strain Hungary19A-6).